The sequence spans 166 residues: MKIGIMSDTHDHLPNIRKAIEIFNDENVETVIHCGDFVSLFVIKEFENLNANIIATYGNNDGERCKLKEWLKDINEENIIDDFISVEIDDLKFFITHGHHQSVLEMAIKSGLYDVVIYGHTHERVFEEVDDVLVINPGECCGYLTGIPTIGILDTEKKEYREIVLE.

Mn(2+)-binding residues include Asp-8, His-10, Asp-36, Asn-59, His-97, His-120, and His-122. 7 residues coordinate Ni(2+): Asp-8, His-10, Asp-36, Asn-59, His-97, His-120, and His-122.

The protein belongs to the metallophosphoesterase superfamily. YfcE family. As to quaternary structure, monomer. The cofactor is Ni(2+). Mn(2+) serves as cofactor.

With respect to regulation, competitively inhibited by phosphate. Shows phosphodiesterase activity. Hydrolyzes phosphodiesters bonds in the artificial chromogenic substrates bis-p-nitrophenyl phosphate (bis-pNPP), and less efficiently thymidine 5'-monophosphate p-nitrophenyl ester (pNP-TMP) and p-nitrophenylphosphorylcholine (pNPPC). No catalytic activity was found toward cAMP or cGMP, nucleotides or phospholipase substrates such as phosphatidylcholine. The physiological substrate is unknown. This is Phosphodiesterase MJ0936 from Methanocaldococcus jannaschii (strain ATCC 43067 / DSM 2661 / JAL-1 / JCM 10045 / NBRC 100440) (Methanococcus jannaschii).